A 358-amino-acid polypeptide reads, in one-letter code: Uroporphyrinogen decarboxylase (358 aa).

Substrate-binding positions include 36–40 (RQAGR), aspartate 85, tyrosine 160, serine 215, and histidine 338.

This sequence belongs to the uroporphyrinogen decarboxylase family. As to quaternary structure, homodimer.

It localises to the cytoplasm. It carries out the reaction uroporphyrinogen III + 4 H(+) = coproporphyrinogen III + 4 CO2. It participates in porphyrin-containing compound metabolism; protoporphyrin-IX biosynthesis; coproporphyrinogen-III from 5-aminolevulinate: step 4/4. In terms of biological role, catalyzes the decarboxylation of four acetate groups of uroporphyrinogen-III to yield coproporphyrinogen-III. In Corynebacterium glutamicum (strain R), this protein is Uroporphyrinogen decarboxylase.